Reading from the N-terminus, the 451-residue chain is UPF0210 protein NGO_1297 (451 aa).

The protein belongs to the UPF0210 family. Homodimer.

The polypeptide is UPF0210 protein NGO_1297 (Neisseria gonorrhoeae (strain ATCC 700825 / FA 1090)).